Consider the following 103-residue polypeptide: Large ribosomal subunit protein bL21 (103 aa).

The protein belongs to the bacterial ribosomal protein bL21 family. In terms of assembly, part of the 50S ribosomal subunit. Contacts protein L20.

In terms of biological role, this protein binds to 23S rRNA in the presence of protein L20. This is Large ribosomal subunit protein bL21 from Salmonella agona (strain SL483).